The primary structure comprises 237 residues: Phosphoribosylaminoimidazole-succinocarboxamide synthase (237 aa).

It belongs to the SAICAR synthetase family.

The enzyme catalyses 5-amino-1-(5-phospho-D-ribosyl)imidazole-4-carboxylate + L-aspartate + ATP = (2S)-2-[5-amino-1-(5-phospho-beta-D-ribosyl)imidazole-4-carboxamido]succinate + ADP + phosphate + 2 H(+). Its pathway is purine metabolism; IMP biosynthesis via de novo pathway; 5-amino-1-(5-phospho-D-ribosyl)imidazole-4-carboxamide from 5-amino-1-(5-phospho-D-ribosyl)imidazole-4-carboxylate: step 1/2. The chain is Phosphoribosylaminoimidazole-succinocarboxamide synthase from Pseudomonas fluorescens (strain SBW25).